The primary structure comprises 331 residues: MKASSVLLGLAPLAALAAPTPEAELSARQAQQSIDALMKAKGKLYFGTATDQGLLNTGKNSAIIKADFGQVTPENSMKCQSLENTRGQYNWAPADALVNFAVSNNKSIRGHTLIWHSQLPGWVNNINDRNQLTTVIQNHVATVMGRWKGKIRAWDVVNEIFNEDGTMRQSVFSRVLGEDFVRIAFEAARKADPNAKLYINDYNLDRPNAGKLTKGMVGHVKKWVGAGVPIDGIGRQGHLQSGQGNGLGQGIKGLGDSGVKEVGGNELDIQGNNGNEFGGGNKACLPVPACVGIPAWGVRDNDSWRPQGNPLLFDSNYNPKPAYNSVVQALK.

The N-terminal stretch at 1–17 (MKASSVLLGLAPLAALA) is a signal peptide. The GH10 domain maps to 31–329 (QQSIDALMKA…KPAYNSVVQA (299 aa)). Asn-105 carries an N-linked (GlcNAc...) asparagine glycan. Residue Glu-159 is the Proton donor of the active site. Glu-266 serves as the catalytic Nucleophile. A disulfide bridge links Cys-284 with Cys-290. Asn-301 carries an N-linked (GlcNAc...) asparagine glycan.

This sequence belongs to the glycosyl hydrolase 10 (cellulase F) family.

Its subcellular location is the secreted. It catalyses the reaction Endohydrolysis of (1-&gt;4)-beta-D-xylosidic linkages in xylans.. Its pathway is glycan degradation; xylan degradation. Its function is as follows. Endo-1,4-beta-xylanase involved in the hydrolysis of xylan, a major structural heterogeneous polysaccharide found in plant biomass representing the second most abundant polysaccharide in the biosphere, after cellulose. Accounts for approximately 70 percent of the endoxylanase activity in the culture filtrate. In Pyricularia grisea (Crabgrass-specific blast fungus), this protein is Endo-1,4-beta-xylanase 2 (XYL2).